The following is a 269-amino-acid chain: Surfeit locus protein 4 (269 aa).

5 consecutive transmembrane segments (helical) span residues 64 to 84, 92 to 112, 179 to 199, 203 to 223, and 239 to 259; these read LLAS…CILV, YACF…SILW, FFSI…AIGF, LAAL…NAFW, and FFQT…GPGG. The short motif at 266–269 is the Di-lysine motif element; it reads KKEW.

The protein belongs to the SURF4 family. In terms of assembly, found in a complex composed at least of SURF4, TMED2 and TMED10. May interact with LMAN1. Interacts with ZFYVE27 and with KIF5A in a ZFYVE27-dependent manner. Interacts with STING1. Interacts with SAR1B. Interacts with TMEM41B.

The protein resides in the endoplasmic reticulum membrane. It is found in the endoplasmic reticulum-Golgi intermediate compartment membrane. It localises to the golgi apparatus membrane. Functionally, endoplasmic reticulum cargo receptor that mediates the export of lipoproteins by recruiting cargos into COPII vesicles to facilitate their secretion. Acts as a cargo receptor for lipoproteins bearing both APOB and APOA1, thereby regulating lipoprotein delivery and the maintenance of lipid homeostasis. Synergizes with the GTPase SAR1B to mediate transport of circulating lipoproteins. Promotes the secretion of PCSK9. Also mediates the efficient secretion of erythropoietin (EPO). May also play a role in the maintenance of the architecture of the endoplasmic reticulum-Golgi intermediate compartment and of the Golgi. The polypeptide is Surfeit locus protein 4 (Bos taurus (Bovine)).